A 176-amino-acid chain; its full sequence is Inorganic pyrophosphatase (176 aa).

Substrate contacts are provided by K30, R44, and Y56. Mg(2+) is bound by residues D66, D71, and D103. Substrate is bound at residue Y142.

The protein belongs to the PPase family. Homohexamer. Requires Mg(2+) as cofactor.

Its subcellular location is the cytoplasm. The catalysed reaction is diphosphate + H2O = 2 phosphate + H(+). In terms of biological role, catalyzes the hydrolysis of inorganic pyrophosphate (PPi) forming two phosphate ions. The polypeptide is Inorganic pyrophosphatase (Vibrio parahaemolyticus serotype O3:K6 (strain RIMD 2210633)).